A 592-amino-acid chain; its full sequence is Aspartate--tRNA ligase (592 aa).

Glu-171 contacts L-aspartate. The tract at residues 195–198 (QLFK) is aspartate. Arg-217 lines the L-aspartate pocket. ATP-binding positions include 217 to 219 (RDE) and Gln-226. His-448 is an L-aspartate binding site. An ATP-binding site is contributed by Glu-482. Residue Arg-489 coordinates L-aspartate. 534–537 (GLDR) lines the ATP pocket.

It belongs to the class-II aminoacyl-tRNA synthetase family. Type 1 subfamily. As to quaternary structure, homodimer.

It localises to the cytoplasm. It carries out the reaction tRNA(Asp) + L-aspartate + ATP = L-aspartyl-tRNA(Asp) + AMP + diphosphate. In terms of biological role, catalyzes the attachment of L-aspartate to tRNA(Asp) in a two-step reaction: L-aspartate is first activated by ATP to form Asp-AMP and then transferred to the acceptor end of tRNA(Asp). In Vibrio vulnificus (strain YJ016), this protein is Aspartate--tRNA ligase.